The following is a 324-amino-acid chain: tRNA dimethylallyltransferase (324 aa).

17–24 (GPTASGKT) contacts ATP. 19–24 (TASGKT) is a substrate binding site. 4 interaction with substrate tRNA regions span residues 42 to 45 (DSAL), 166 to 170 (QRIQR), 251 to 256 (RCVGYR), and 284 to 291 (KRQITWLR).

Belongs to the IPP transferase family. As to quaternary structure, monomer. The cofactor is Mg(2+).

The catalysed reaction is adenosine(37) in tRNA + dimethylallyl diphosphate = N(6)-dimethylallyladenosine(37) in tRNA + diphosphate. Its function is as follows. Catalyzes the transfer of a dimethylallyl group onto the adenine at position 37 in tRNAs that read codons beginning with uridine, leading to the formation of N6-(dimethylallyl)adenosine (i(6)A). This is tRNA dimethylallyltransferase from Burkholderia orbicola (strain MC0-3).